The following is a 126-amino-acid chain: Nascent polypeptide-associated complex protein (126 aa).

Residues 10–77 enclose the NAC-A/B domain; sequence PRMMKQMQKM…AKKVAKEEEK (68 aa).

Belongs to the NAC-alpha family. Homodimer. Interacts with the ribosome. Binds ribosomal RNA.

In terms of biological role, contacts the emerging nascent chain on the ribosome. In Methanococcus maripaludis (strain C7 / ATCC BAA-1331), this protein is Nascent polypeptide-associated complex protein.